The chain runs to 99 residues: METTKSNSSESDVNAKWDACLDLTARRFVYSSLGGAFAGLLFFRSPVTRWASIAFGAGIGIGSAYTDCSRVFDASSSTSATLLAAPKSTETSVSQAAEE.

Helical transmembrane passes span 27–43 (RFVY…LLFF) and 50–66 (WASI…SAYT).

Belongs to the MICOS complex subunit Mic10 family. As to quaternary structure, component of the mitochondrial contact site and cristae organizing system (MICOS) complex. The MICOS complex associates with mitochondrial outer membrane proteins. Present in a large lipid-enriched complex called mitochondrial transmembrane lipoprotein (MTL) complex made of proteins located in the two mitochondrial membranes, including the TOM complex and the core components of the MICOS complex and containing at least digalactosyldiacylglycerol (DGDG).

The protein localises to the mitochondrion inner membrane. Component of the MICOS complex, a large protein complex of the mitochondrial inner membrane that plays crucial roles in the maintenance of crista junctions, inner membrane architecture, and formation of contact sites to the outer membrane. The chain is MICOS complex subunit MIC10 from Arabidopsis thaliana (Mouse-ear cress).